The following is a 370-amino-acid chain: Serine/threonine-protein kinase SAPK5 (370 aa).

The Protein kinase domain occupies 4–260 (YEPVREIGAG…MGEIKSHPWF (257 aa)). ATP is bound by residues 10-18 (IGAGNFGVA) and Lys-33. Asp-123 functions as the Proton acceptor in the catalytic mechanism. The tract at residues 312–370 (EAQTVPKPDKPVSGYGWGTDDDDDDQQPAEEEDEEDDYDRTVREVHASVDLDMSNLQIS) is disordered. Positions 330–349 (TDDDDDDQQPAEEEDEEDDY) are enriched in acidic residues. Residues 350–360 (DRTVREVHASV) show a composition bias toward basic and acidic residues.

It belongs to the protein kinase superfamily. Ser/Thr protein kinase family. May be phosphorylated. Expressed in leaf blades, leaf sheaths and roots. Expressed in shoots and roots of young seedlings.

The protein resides in the cytoplasm. The protein localises to the nucleus. The enzyme catalyses L-seryl-[protein] + ATP = O-phospho-L-seryl-[protein] + ADP + H(+). It catalyses the reaction L-threonyl-[protein] + ATP = O-phospho-L-threonyl-[protein] + ADP + H(+). With respect to regulation, activated by hyperosmotic stress. Functionally, may play a role in signal transduction of hyperosmotic response. The protein is Serine/threonine-protein kinase SAPK5 (SAPK5) of Oryza sativa subsp. japonica (Rice).